The chain runs to 399 residues: MVFSSFPTYPDHSSNWQQQHQPITTTVGFTGNNINQQFLPHHPLPPQQQQTPPQLHHNNGNGGVAVPGGPGGLIRPGSMAERARLANIPLPETALKCPRCDSTNTKFCYFNNYSLTQPRHFCKACRRYWTRGGALRSVPVGGGCRRNKRTKNSSGGGGGSTSSGNSKSQDSATSNDQYHHRAMANNQMGPPSSSSSLSSLLSSYNAGLIPGHDHNSNNNNILGLGSSLPPLKLMPPLDFTDNFTLQYGAVSAPSYHIGGGSSGGAAALLNGFDQWRFPATNQLPLGGLDPFDQQHQMEQQNPGYGLVTGSGQYRPKNIFHNLISSSSSASSAMVTATASQLASVKMEDSNNQLNLSRQLFGDEQQLWNIHGAAAASTAAATSSWSEVSNNFSSSSTSNI.

Residues 95-149 (LKCPRCDSTNTKFCYFNNYSLTQPRHFCKACRRYWTRGGALRSVPVGGGCRRNKR) form a Dof-type zinc finger. 4 residues coordinate Zn(2+): C97, C100, C122, and C125. Residues 139–176 (PVGGGCRRNKRTKNSSGGGGGSTSSGNSKSQDSATSND) form a disordered region.

As to expression, expressed ubiquitously, especially in the vascular tissues, except in seeds, petals and anthers. Specific to the vascular tissues in young leaves, cotyledons and flower buds. The PEAR proteins (e.g. DOF2.4, DOF5.1, DOF3.2, DOF1.1, DOF5.6 and DOF5.3) form a short-range concentration gradient that peaks at protophloem sieve elements (PSE).

The protein resides in the nucleus. Its function is as follows. Transcription factor that binds specifically to a 5'-AA[AG]G-3' consensus core sequence. Binds to 5'-TAAAGT-3' motif in REV promoter to triggers its transcription, thus regulating adaxial-abaxial polarity and influencing leaf axial patterning in an auxin transport- and response-dependent manner (e.g. IAA6 and IAA19 genes expression). Probably involved in early processes for vascular development. The PEAR proteins (e.g. DOF2.4, DOF5.1, DOF3.2, DOF1.1, DOF5.6 and DOF5.3) activate gene expression that promotes radial growth of protophloem sieve elements. The protein is Dof zinc finger protein DOF5.1 of Arabidopsis thaliana (Mouse-ear cress).